A 193-amino-acid chain; its full sequence is Large ribosomal subunit protein uL18 (193 aa).

It belongs to the universal ribosomal protein uL18 family. In terms of assembly, part of the 50S ribosomal subunit. Contacts the 5S and 23S rRNAs.

Its function is as follows. This is one of the proteins that bind and probably mediate the attachment of the 5S RNA into the large ribosomal subunit, where it forms part of the central protuberance. In Methanococcus maripaludis (strain C5 / ATCC BAA-1333), this protein is Large ribosomal subunit protein uL18.